The sequence spans 467 residues: Pancreatic lipase-related protein 3 (467 aa).

Positions 1 to 17 (MLGIWIVAFLFFGTSRG) are cleaved as a signal peptide. Cys-21 and Cys-27 are disulfide-bonded. Asn-74 carries N-linked (GlcNAc...) asparagine glycosylation. Cys-107 and Cys-118 are joined by a disulfide. Asn-125 carries N-linked (GlcNAc...) asparagine glycosylation. Ser-168 (nucleophile) is an active-site residue. The Charge relay system role is filled by Asp-191. Cys-252 and Cys-277 are disulfide-bonded. His-279 functions as the Charge relay system in the catalytic mechanism. 3 disulfides stabilise this stretch: Cys-301–Cys-312, Cys-315–Cys-320, and Cys-451–Cys-467. A PLAT domain is found at 355 to 467 (WRHKLSVKLS…PNILQNLKPC (113 aa)).

It belongs to the AB hydrolase superfamily. Lipase family. As to expression, overexpressed in hepatocellular carcinoma.

The protein resides in the secreted. It catalyses the reaction a triacylglycerol + H2O = a diacylglycerol + a fatty acid + H(+). The sequence is that of Pancreatic lipase-related protein 3 (PNLIPRP3) from Homo sapiens (Human).